Here is a 277-residue protein sequence, read N- to C-terminus: Large ribosomal subunit protein uL2 (277 aa).

Residues 218 to 277 (PTVRGSVMNPNDHPHGGGEGKSPIGHPSPLTPWGKPALGYKTRKNKKYSDGMIIKRRGQK) are disordered.

The protein belongs to the universal ribosomal protein uL2 family. As to quaternary structure, part of the 50S ribosomal subunit. Forms a bridge to the 30S subunit in the 70S ribosome.

Its function is as follows. One of the primary rRNA binding proteins. Required for association of the 30S and 50S subunits to form the 70S ribosome, for tRNA binding and peptide bond formation. It has been suggested to have peptidyltransferase activity; this is somewhat controversial. Makes several contacts with the 16S rRNA in the 70S ribosome. The sequence is that of Large ribosomal subunit protein uL2 from Clostridium novyi (strain NT).